We begin with the raw amino-acid sequence, 328 residues long: Probable cell division protein WhiA (328 aa).

The segment at residues 275 to 308 (SLEELGQLHDPVLTKDAIAGRIRRLLAMADKRAE) is a DNA-binding region (H-T-H motif).

It belongs to the WhiA family.

Involved in cell division and chromosome segregation. The protein is Probable cell division protein WhiA of Nocardioides sp. (strain ATCC BAA-499 / JS614).